The chain runs to 233 residues: UPF0280 protein AF_0649 (233 aa).

It belongs to the UPF0280 family.

This Archaeoglobus fulgidus (strain ATCC 49558 / DSM 4304 / JCM 9628 / NBRC 100126 / VC-16) protein is UPF0280 protein AF_0649.